The chain runs to 530 residues: Glutamate--cysteine ligase (530 aa).

Belongs to the glutamate--cysteine ligase type 1 family. Type 1 subfamily.

It catalyses the reaction L-cysteine + L-glutamate + ATP = gamma-L-glutamyl-L-cysteine + ADP + phosphate + H(+). It functions in the pathway sulfur metabolism; glutathione biosynthesis; glutathione from L-cysteine and L-glutamate: step 1/2. The chain is Glutamate--cysteine ligase from Pseudomonas entomophila (strain L48).